We begin with the raw amino-acid sequence, 356 residues long: Aminodeoxyfutalosine deaminase (356 aa).

Positions 18 and 20 each coordinate Zn(2+). Arg-73, Glu-140, and Gly-172 together coordinate substrate. Residue His-199 coordinates Zn(2+). The active-site Proton donor is the Glu-202. Asp-287 contacts Zn(2+).

The protein belongs to the metallo-dependent hydrolases superfamily. Adenosine and AMP deaminases family. It depends on Zn(2+) as a cofactor.

The enzyme catalyses 6-amino-6-deoxyfutalosine + H2O + H(+) = futalosine + NH4(+). It functions in the pathway quinol/quinone metabolism; menaquinone biosynthesis. Catalyzes the deamination of aminodeoxyfutalosine (AFL) into futalosine (FL), a step in the biosynthesis of menaquinone (MK, vitamin K2). Is very poorly efficient on 1-(6-amino-9H-purin-9-yl)-1-deoxy-N-ethyl-beta-D-ribofuranuronamide (NECA), adenosine, 5'-methylthioadenosine, 5'-deoxyadenosine, 2'-deoxyadenosine, and AMP as substrate. This Acidothermus cellulolyticus (strain ATCC 43068 / DSM 8971 / 11B) protein is Aminodeoxyfutalosine deaminase.